The following is a 206-amino-acid chain: Probable thymidylate kinase (206 aa).

An ATP-binding site is contributed by 10-17 (GIDGSGKS).

The protein belongs to the thymidylate kinase family.

It carries out the reaction dTMP + ATP = dTDP + ADP. In Methanosarcina acetivorans (strain ATCC 35395 / DSM 2834 / JCM 12185 / C2A), this protein is Probable thymidylate kinase.